The sequence spans 799 residues: Valine--tRNA ligase (799 aa).

Lys536 contributes to the ATP binding site.

This sequence belongs to the class-I aminoacyl-tRNA synthetase family. ValS type 2 subfamily.

It localises to the cytoplasm. It carries out the reaction tRNA(Val) + L-valine + ATP = L-valyl-tRNA(Val) + AMP + diphosphate. Its function is as follows. Catalyzes the attachment of valine to tRNA(Val). As ValRS can inadvertently accommodate and process structurally similar amino acids such as threonine, to avoid such errors, it has a 'posttransfer' editing activity that hydrolyzes mischarged Thr-tRNA(Val) in a tRNA-dependent manner. This is Valine--tRNA ligase (valS) from Pyrobaculum aerophilum (strain ATCC 51768 / DSM 7523 / JCM 9630 / CIP 104966 / NBRC 100827 / IM2).